The following is a 186-amino-acid chain: MNHTPILNKKNLIWIDLEMTGLNLENDRIIEIATVITDKYVKILAEGPSIAIFQSEEQLKKMNSWNIFTHTKNGLIDRVRKSKYNEKNAMIDTLKFISSWVPFGKSPICGSSINHDRLFLSKYMPDLEKYFHYRCLDVSVIKELARRWKPKILSKLKKKHTHKALDDIKDSIKELLFYKDTFIKLN.

The region spanning 12-175 (LIWIDLEMTG…DDIKDSIKEL (164 aa)) is the Exonuclease domain. The active site involves Tyr133.

The protein belongs to the oligoribonuclease family.

The protein resides in the cytoplasm. Its function is as follows. 3'-to-5' exoribonuclease specific for small oligoribonucleotides. The protein is Oligoribonuclease of Wigglesworthia glossinidia brevipalpis.